The following is an 87-amino-acid chain: Spermatid-specific protein S1 (87 aa).

Residues 1–36 (TKSRYRNRRSRPRRRYGRRMRKTRCRRKGRRISRRP) are disordered.

The protein localises to the nucleus. Its subcellular location is the chromosome. Its function is as follows. Involved in nuclear basic protein transition: histones are replaced by spermatid specific proteins which are themselves replaced by protamines in late spermatids. The sequence is that of Spermatid-specific protein S1 from Scyliorhinus canicula (Small-spotted catshark).